We begin with the raw amino-acid sequence, 292 residues long: Fat storage-inducing transmembrane protein 1 (292 aa).

At Met1–Arg18 the chain is on the lumenal side. A helical membrane pass occupies residues Ala19–Gly39. The Cytoplasmic portion of the chain corresponds to Ser40 to Arg54. A helical transmembrane segment spans residues Leu55–Asn75. At Ser76–Ser94 the chain is on the lumenal side. The chain crosses the membrane as a helical span at residues Ala95 to Thr115. Topologically, residues Arg116–Ala141 are cytoplasmic. A helical membrane pass occupies residues Phe142–Leu162. The Lumenal portion of the chain corresponds to His163–Thr187. His186 is a catalytic residue. A helical transmembrane segment spans residues Phe188–Leu208. Topologically, residues Ala209–Leu220 are cytoplasmic. A helical membrane pass occupies residues Val221–Ile241. Over Tyr242–Lys249 the chain is Lumenal. His244 is an active-site residue. The chain crosses the membrane as a helical span at residues Val250–Gln270. Over Pro271–Asn292 the chain is Cytoplasmic.

The protein belongs to the FIT family. FIT1 subfamily. In terms of tissue distribution, predominantly expressed in skeletal muscle and at lower levels in the heart (at protein level). In the heart, mRNA expression levels do not correlate well with protein levels, suggesting post-transcriptional regulation in this organ.

Its subcellular location is the endoplasmic reticulum membrane. Plays an important role in the formation of lipid droplets (LDs) which are storage organelles at the center of lipid and energy homeostasis. Directly binds to diacylglycerol (DAGs) and triacylglycerol. The protein is Fat storage-inducing transmembrane protein 1 of Mus musculus (Mouse).